A 415-amino-acid polypeptide reads, in one-letter code: Histidine--tRNA ligase (415 aa).

This sequence belongs to the class-II aminoacyl-tRNA synthetase family. In terms of assembly, homodimer.

The protein resides in the cytoplasm. The catalysed reaction is tRNA(His) + L-histidine + ATP = L-histidyl-tRNA(His) + AMP + diphosphate + H(+). The polypeptide is Histidine--tRNA ligase (Rickettsia canadensis (strain McKiel)).